The chain runs to 464 residues: MPVFEDVTRALVRELNPRGDLTPLDSLIDFKHFRPFCLVLRKRKSTLFWGARYVRTDYTLLDLLEPGSSPSDLTDSGNFSFKNMLDVQVQGLVEVPKTVKVKGTAGLSQSSTLEVQTLSVAPSALENLKKERKLSADHSFLNEMRYHEKNLYVVMEAVEAKQEVTVEQTGNANAIFSLPSLALLGLQGSLNNNKAVTIPKGCVLAYRVRLLRVFLFNLWDIPYICNDSMQTFPKIRRVPCSAFISPTQMISEEPEEEKLIGEMHEDFKTLKEEVQRETQEVEKLSPVGRSSLLTSLSHLLGKKKELQDLEQKLEGALDKGQKVTLEALPKDVLLSKDAMDAILYFLGALTELTEEQLKILVKSLEKKILPVQLKLVESTLEQNFLQDKEGVFPLQPDLLSSLGEEELTLTEALVGLSGLEVQRSGPQYAWDPDTRHNLCALYAGLSLLHLLSRKSNALTYCALS.

The triggers pyroptosis stretch occupies residues 1–261 (MPVFEDVTRA…EEPEEEKLIG (261 aa)). 9–13 (RALVR) is a binding site for a cardiolipin. 4 beta stranded membrane-spanning segments follow: residues 78–95 (NFSF…LVEV), 99–120 (VKVK…TLSV), 164–180 (VTVE…SLPS), and 184–198 (LGLQ…AVTI). Residues 255-327 (EEEKLIGEMH…DKGQKVTLEA (73 aa)) adopt a coiled-coil conformation.

The protein belongs to the gasdermin family. Homooligomer; homooligomeric ring-shaped pore complex containing 18-36 subunits when inserted in the membrane. In terms of processing, cleavage relieves autoinhibition by releasing the N-terminal moiety (Gasdermin-A3, N-terminal) that initiates pyroptosis. In contrast to Gsdma, not cleaved by bacterial effector protein SpeB. Palmitoylated. Highest levels in skin with weak expression in placenta and testis. Not detected in the gastrointestinal tract. In skin, expressed in postnatal hair follicles and epidermis as well as sebaceous gland basal cells.

The protein resides in the cytoplasm. It is found in the cytosol. Its subcellular location is the cell membrane. The protein localises to the mitochondrion membrane. With respect to regulation, the full-length protein before cleavage is inactive: intramolecular interactions between N- and C-terminal domains mediate autoinhibition in the absence of activation signal. The intrinsic pyroptosis-inducing activity is carried by the released N-terminal moiety (Gasdermin-A3, N-terminal). Precursor of a pore-forming protein involved in the transition from catagen to telogen at the end of hair follicle morphogenesis. This form constitutes the precursor of the pore: upon cleavage, the released N-terminal moiety (Gasdermin-A3, N-terminal) binds to membranes and forms pores, triggering pyroptosis. This form acts as a sensor of infection: activation is triggered by cleavage by some bacterial effector protein, which releases the N-terminal moiety (Gasdermin-A3, N-terminal). In terms of biological role, pore-forming protein that causes membrane permeabilization and pyroptosis. Released upon cleavage by some bacterial effector protein, and binds to membrane inner leaflet lipids. Homooligomerizes within the membrane and forms pores of 10-15 nanometers (nm) of inner diameter, allowing the release of mature interleukin-1 (IL1B and IL18) and triggering pyroptosis. Binds to membrane inner leaflet lipids, including bisphosphorylated phosphatidylinositols, such as phosphatidylinositol (4,5)-bisphosphate, as well as phosphatidylinositol (3,4,5)-bisphosphate, and more weakly to monophosphorylated phosphatidylinositols. Also binds to bacterial and mitochondrial lipids, including cardiolipin, and exhibits bactericidal activity. Plays a role in the transition from catagen to telogen at the end of hair follicle morphogenesis, possibly by regulating hair follicle stem cell niche maintenance. Also required for mammary gland development. This chain is Gasdermin-A3, found in Mus musculus (Mouse).